The following is a 346-amino-acid chain: MILEKYGFTSFFEEQKIAATSSYGRVTAVFRDFYRVITENGEFLATLKRGNFYELSPSNLPAVGDFVEVSNEKQILSVLQRKTIFSRMTKDSEEQLIAANFDYALIVMSLNHDFNLNRLERYLTVAWDSGATPIIILTKADLVDDLTPFTMELETVAYGVPTYYVDNLSHRGFEALEADLKPNSTLVLLGSSGVGKSSFINSLAGADLMKTSEIREDDSKGKHTTTHREMHLLANGWIIIDTPGMREFGIGLNQAGLETTFSDVEELSKDCRFHDCSHTSEPGCAVQESLADGTLSLKHYENWQKLQREMAYHARKNSPALARQERDRWKTIQKSLRTHLKTRPKR.

In terms of domain architecture, CP-type G spans 93-248 (EEQLIAANFD…IIDTPGMREF (156 aa)). Residues 138-141 (TKAD) and 190-198 (GSSGVGKSS) each bind GTP. Zn(2+) contacts are provided by cysteine 271, cysteine 276, histidine 278, and cysteine 284.

Belongs to the TRAFAC class YlqF/YawG GTPase family. RsgA subfamily. In terms of assembly, monomer. Associates with 30S ribosomal subunit, binds 16S rRNA. Zn(2+) serves as cofactor.

Its subcellular location is the cytoplasm. Functionally, one of several proteins that assist in the late maturation steps of the functional core of the 30S ribosomal subunit. Helps release RbfA from mature subunits. May play a role in the assembly of ribosomal proteins into the subunit. Circularly permuted GTPase that catalyzes slow GTP hydrolysis, GTPase activity is stimulated by the 30S ribosomal subunit. The sequence is that of Small ribosomal subunit biogenesis GTPase RsgA 1 from Listeria innocua serovar 6a (strain ATCC BAA-680 / CLIP 11262).